Here is a 172-residue protein sequence, read N- to C-terminus: Endoribonuclease YbeY (172 aa).

Residues 1 to 21 (MTLHVGAEPAPREDDTEDALR) are disordered. The span at 10 to 21 (APREDDTEDALR) shows a compositional bias: basic and acidic residues. His134, His138, and His144 together coordinate Zn(2+).

It belongs to the endoribonuclease YbeY family. Requires Zn(2+) as cofactor.

The protein resides in the cytoplasm. Single strand-specific metallo-endoribonuclease involved in late-stage 70S ribosome quality control and in maturation of the 3' terminus of the 16S rRNA. In Burkholderia lata (strain ATCC 17760 / DSM 23089 / LMG 22485 / NCIMB 9086 / R18194 / 383), this protein is Endoribonuclease YbeY.